The following is a 243-amino-acid chain: Proteasome subunit beta (243 aa).

The tract at residues 1 to 40 (MRTPMNNDISGRPDSLNGDRSDVFSPELGEFPNADDRAND) is disordered. A propeptide spans 1-49 (MRTPMNNDISGRPDSLNGDRSDVFSPELGEFPNADDRANDIGDMETKTG) (removed in mature form; by autocatalysis). T50 (nucleophile) is an active-site residue.

The protein belongs to the peptidase T1B family. As to quaternary structure, the 20S proteasome core is composed of 14 alpha and 14 beta subunits that assemble into four stacked heptameric rings, resulting in a barrel-shaped structure. The two inner rings, each composed of seven catalytic beta subunits, are sandwiched by two outer rings, each composed of seven alpha subunits. The catalytic chamber with the active sites is on the inside of the barrel. Has a gated structure, the ends of the cylinder being occluded by the N-termini of the alpha-subunits. Is capped at one or both ends by the proteasome regulatory ATPase, PAN.

It localises to the cytoplasm. It carries out the reaction Cleavage of peptide bonds with very broad specificity.. With respect to regulation, the formation of the proteasomal ATPase PAN-20S proteasome complex, via the docking of the C-termini of PAN into the intersubunit pockets in the alpha-rings, triggers opening of the gate for substrate entry. Interconversion between the open-gate and close-gate conformations leads to a dynamic regulation of the 20S proteasome proteolysis activity. In terms of biological role, component of the proteasome core, a large protease complex with broad specificity involved in protein degradation. The polypeptide is Proteasome subunit beta (Haloquadratum walsbyi (strain DSM 16790 / HBSQ001)).